The sequence spans 206 residues: Uridine kinase (206 aa).

9 to 16 serves as a coordination point for ATP; sequence GGSGSGKT.

The protein belongs to the uridine kinase family. As to quaternary structure, monomer.

It is found in the cytoplasm. It carries out the reaction uridine + ATP = UMP + ADP + H(+). It catalyses the reaction cytidine + ATP = CMP + ADP + H(+). The protein operates within pyrimidine metabolism; CTP biosynthesis via salvage pathway; CTP from cytidine: step 1/3. It participates in pyrimidine metabolism; UMP biosynthesis via salvage pathway; UMP from uridine: step 1/1. This is Uridine kinase (udk) from Borreliella burgdorferi (strain ATCC 35210 / DSM 4680 / CIP 102532 / B31) (Borrelia burgdorferi).